The sequence spans 937 residues: Isoleucine--tRNA ligase (937 aa).

The short motif at 57–67 (PYANGPIHMGH) is the 'HIGH' region element. Residue Glu556 participates in L-isoleucyl-5'-AMP binding. The 'KMSKS' region motif lies at 597-601 (KMSKS). Lys600 lines the ATP pocket. Cys895, Cys898, Cys915, and Cys918 together coordinate Zn(2+).

Belongs to the class-I aminoacyl-tRNA synthetase family. IleS type 1 subfamily. As to quaternary structure, monomer. Zn(2+) serves as cofactor.

The protein localises to the cytoplasm. It catalyses the reaction tRNA(Ile) + L-isoleucine + ATP = L-isoleucyl-tRNA(Ile) + AMP + diphosphate. Functionally, catalyzes the attachment of isoleucine to tRNA(Ile). As IleRS can inadvertently accommodate and process structurally similar amino acids such as valine, to avoid such errors it has two additional distinct tRNA(Ile)-dependent editing activities. One activity is designated as 'pretransfer' editing and involves the hydrolysis of activated Val-AMP. The other activity is designated 'posttransfer' editing and involves deacylation of mischarged Val-tRNA(Ile). The chain is Isoleucine--tRNA ligase from Levilactobacillus brevis (strain ATCC 367 / BCRC 12310 / CIP 105137 / JCM 1170 / LMG 11437 / NCIMB 947 / NCTC 947) (Lactobacillus brevis).